Reading from the N-terminus, the 184-residue chain is MDLSGSLLIAMPSMADPRFERSLVLICAHSPDGAMGLVINKPVEDLSFAGMLEQLNIPRAPNGRDIRVHLGGPMERGRGFVLHSPDYMSVGATMLVSGKFGMTATVDILEALARGQGPSSALMALGYSGWGPGQVEAEVQRNDWLTAEAPSELVFSDDDPGKWTGMLRHMGIDPLTLSSTAGHA.

It belongs to the UPF0301 (AlgH) family.

The protein is UPF0301 protein RSKD131_2391 of Cereibacter sphaeroides (strain KD131 / KCTC 12085) (Rhodobacter sphaeroides).